The primary structure comprises 71 residues: Dermonecrotic toxin LgSicTox-alphaI-Loxn-A (71 aa).

Histidine 12 is an active-site residue. Glutamate 32, aspartate 34, and aspartate 48 together coordinate Mg(2+).

Requires Mg(2+) as cofactor. Post-translationally, contains 2 disulfide bonds. Expressed by the venom gland.

Its subcellular location is the secreted. The enzyme catalyses an N-(acyl)-sphingosylphosphocholine = an N-(acyl)-sphingosyl-1,3-cyclic phosphate + choline. It carries out the reaction an N-(acyl)-sphingosylphosphoethanolamine = an N-(acyl)-sphingosyl-1,3-cyclic phosphate + ethanolamine. The catalysed reaction is a 1-acyl-sn-glycero-3-phosphocholine = a 1-acyl-sn-glycero-2,3-cyclic phosphate + choline. It catalyses the reaction a 1-acyl-sn-glycero-3-phosphoethanolamine = a 1-acyl-sn-glycero-2,3-cyclic phosphate + ethanolamine. Its function is as follows. Catalyzes the hydrolysis of sphingomyelin. May also act on other phosphatidyl esters. Dermonecrotic toxins cleave the phosphodiester linkage between the phosphate and headgroup of certain phospholipids (sphingolipid and lysolipid substrates), forming an alcohol (often choline) and a cyclic phosphate. This toxin acts on sphingomyelin (SM). It may also act on ceramide phosphoethanolamine (CPE), lysophosphatidylcholine (LPC) and lysophosphatidylethanolamine (LPE), but not on lysophosphatidylserine (LPS), and lysophosphatidylglycerol (LPG). It acts by transphosphatidylation, releasing exclusively cyclic phosphate products as second products. In vivo, induces dermonecrosis, but is not lethal. Induces hemolysis, vascular permeability, edema, inflammatory response, and platelet aggregation. This Loxosceles gaucho (Spider) protein is Dermonecrotic toxin LgSicTox-alphaI-Loxn-A.